The sequence spans 216 residues: 7-carboxy-7-deazaguanine synthase (216 aa).

Substrate is bound by residues 12–14 (LQG) and arginine 27. Positions 18 to 216 (RAGRAAVFCR…LQTHKYLGIP (199 aa)) constitute a Radical SAM core domain. The [4Fe-4S] cluster site is built by cysteine 31, cysteine 46, and cysteine 49. Threonine 51 lines the Mg(2+) pocket. Substrate is bound at residue threonine 93. S-adenosyl-L-methionine-binding positions include glycine 95, 136–138 (SPK), and 176–179 (QPRD). Proline 216 contributes to the substrate binding site.

The protein belongs to the radical SAM superfamily. 7-carboxy-7-deazaguanine synthase family. As to quaternary structure, homodimer. [4Fe-4S] cluster serves as cofactor. It depends on S-adenosyl-L-methionine as a cofactor. Mg(2+) is required as a cofactor.

It carries out the reaction 6-carboxy-5,6,7,8-tetrahydropterin + H(+) = 7-carboxy-7-deazaguanine + NH4(+). It participates in purine metabolism; 7-cyano-7-deazaguanine biosynthesis. Functionally, catalyzes the complex heterocyclic radical-mediated conversion of 6-carboxy-5,6,7,8-tetrahydropterin (CPH4) to 7-carboxy-7-deazaguanine (CDG), a step common to the biosynthetic pathways of all 7-deazapurine-containing compounds. This chain is 7-carboxy-7-deazaguanine synthase, found in Nitratidesulfovibrio vulgaris (strain ATCC 29579 / DSM 644 / CCUG 34227 / NCIMB 8303 / VKM B-1760 / Hildenborough) (Desulfovibrio vulgaris).